A 130-amino-acid chain; its full sequence is Small ribosomal subunit protein uS8 (130 aa).

This sequence belongs to the universal ribosomal protein uS8 family. As to quaternary structure, part of the 30S ribosomal subunit.

In terms of biological role, one of the primary rRNA binding proteins, it binds directly to 16S rRNA central domain where it helps coordinate assembly of the platform of the 30S subunit. This Methanotorris igneus (Methanococcus igneus) protein is Small ribosomal subunit protein uS8.